Consider the following 119-residue polypeptide: Holo-[acyl-carrier-protein] synthase (119 aa).

Mg(2+) is bound by residues Asp-8 and Glu-58.

Belongs to the P-Pant transferase superfamily. AcpS family. Requires Mg(2+) as cofactor.

Its subcellular location is the cytoplasm. The enzyme catalyses apo-[ACP] + CoA = holo-[ACP] + adenosine 3',5'-bisphosphate + H(+). Functionally, transfers the 4'-phosphopantetheine moiety from coenzyme A to a Ser of acyl-carrier-protein. The protein is Holo-[acyl-carrier-protein] synthase of Bacillus cereus (strain G9842).